Consider the following 424-residue polypeptide: L-glutamine:2-deoxy-scyllo-inosose aminotransferase (424 aa).

Residue Lys-202 is modified to N6-(pyridoxal phosphate)lysine.

The protein belongs to the DegT/DnrJ/EryC1 family. L-glutamine:2-deoxy-scyllo-inosose/scyllo-inosose aminotransferase subfamily. Pyridoxal 5'-phosphate is required as a cofactor.

It carries out the reaction 2-deoxy-L-scyllo-inosose + L-glutamine = 2-deoxy-scyllo-inosamine + 2-oxoglutaramate. The catalysed reaction is 3-amino-2,3-dideoxy-scyllo-inosose + L-glutamine = 2-deoxystreptamine + 2-oxoglutaramate. The protein operates within metabolic intermediate biosynthesis; 2-deoxystreptamine biosynthesis; 2-deoxystreptamine from D-glucose 6-phosphate: step 2/4. Its pathway is antibiotic biosynthesis; tobramycin biosynthesis. In terms of biological role, catalyzes the PLP-dependent transamination of 2-deoxy-scyllo-inosose (2-DOI) to form 2-deoxy-scyllo-inosamine (2-DOIA) using L-glutamine as the amino donor. Also catalyzes the transamination of 3-amino-2,3-dideoxy-scyllo-inosose (keto-2-DOIA) into 2-deoxystreptamine (2-DOS). The sequence is that of L-glutamine:2-deoxy-scyllo-inosose aminotransferase (tbmB) from Streptoalloteichus tenebrarius (strain ATCC 17920 / DSM 40477 / JCM 4838 / CBS 697.72 / NBRC 16177 / NCIMB 11028 / NRRL B-12390 / A12253. 1 / ISP 5477) (Streptomyces tenebrarius).